We begin with the raw amino-acid sequence, 175 residues long: O-acetyl-ADP-ribose deacetylase (175 aa).

Positions 1–175 constitute a Macro domain; the sequence is MAVQPEVILG…IYRRLLASYP (175 aa). Substrate is bound by residues 11–12, asparagine 25, 33–35, and 122–126; these read DI, GVD, and STGVY. The Proton acceptor role is filled by aspartate 35.

Belongs to the MacroD-type family. YmdB subfamily. In terms of assembly, homodimer. Interacts with RNase III.

The enzyme catalyses 3''-O-acetyl-ADP-D-ribose + H2O = ADP-D-ribose + acetate + H(+). It catalyses the reaction 2''-O-acetyl-ADP-D-ribose + H2O = ADP-D-ribose + acetate + H(+). Deacetylates O-acetyl-ADP ribose to yield ADP-ribose and free acetate. Down-regulates ribonuclease 3 (RNase III) activity. Acts by interacting directly with the region of the ribonuclease that is required for dimerization/activation. The polypeptide is O-acetyl-ADP-ribose deacetylase (Klebsiella pneumoniae (strain 342)).